A 434-amino-acid chain; its full sequence is MYSLNRLPRSAAFKSSANLLRRNASTTSAGGVNVVGFENKGPAATSSLTVAIKAGSRYETTPGVAHVLKSFAYKATASASALRTAREAELYGGVLSAALTREHLLLSAEFLRGDEEHFLNVLASVLSSSQFYRHELSELVLPVVEAETISSQAIPSTIALDLAHSLAFRRGLGNSLYANKNYPVSIDDVKSFGEAAFAKSNIAVIGTGVSTEALAKAVSNAFGAGTSSGSKLSTPKANYYGGETRVPLDIHAPATATPTMVIAFGTSSPASADLKVLKHLLGGETSVKWTPGASPLAQAADKIPGASAKAFLLPYSDAALFGVVLSAPTSAETKTLAQEVASIVKNAGEFKEEEVKRAVAKATFEDAASTETLSGFVAAAGPAALVGSVPEAQSFSGVSASSISKAAGELLKGKPTVVSIGNISVLPYADELGL.

The transit peptide at Met1–Gly31 directs the protein to the mitochondrion.

Belongs to the peptidase M16 family. UQCRC2/QCR2 subfamily. In terms of assembly, component of the ubiquinol-cytochrome c oxidoreductase (cytochrome b-c1 complex, complex III, CIII), a multisubunit enzyme composed of 10 subunits. The complex is composed of 3 respiratory subunits cytochrome b (COB), cytochrome c1 (CYT1) and Rieske protein (RIP1), 2 core protein subunits COR1 and QCR2, and 5 low-molecular weight protein subunits QCR6, QCR7, QCR8, QCR9 and QCR10. The complex exists as an obligatory dimer and forms supercomplexes (SCs) in the inner mitochondrial membrane with a monomer or a dimer of cytochrome c oxidase (complex IV, CIV), resulting in 2 different assemblies (supercomplexes III(2)IV and III(2)IV(2)). Interacts with MRJ1.

The protein localises to the mitochondrion inner membrane. Its function is as follows. Component of the ubiquinol-cytochrome c oxidoreductase, a multisubunit transmembrane complex that is part of the mitochondrial electron transport chain which drives oxidative phosphorylation. The respiratory chain contains 3 multisubunit complexes succinate dehydrogenase (complex II, CII), ubiquinol-cytochrome c oxidoreductase (cytochrome b-c1 complex, complex III, CIII) and cytochrome c oxidase (complex IV, CIV), that cooperate to transfer electrons derived from NADH and succinate to molecular oxygen, creating an electrochemical gradient over the inner membrane that drives transmembrane transport and the ATP synthase. The cytochrome b-c1 complex catalyzes electron transfer from ubiquinol to cytochrome c, linking this redox reaction to translocation of protons across the mitochondrial inner membrane, with protons being carried across the membrane as hydrogens on the quinol. In the process called Q cycle, 2 protons are consumed from the matrix, 4 protons are released into the intermembrane space and 2 electrons are passed to cytochrome c. The chain is Cytochrome b-c1 complex subunit 2, mitochondrial from Cryptococcus neoformans var. grubii serotype A (strain H99 / ATCC 208821 / CBS 10515 / FGSC 9487) (Filobasidiella neoformans var. grubii).